The primary structure comprises 346 residues: Small ribosomal subunit biogenesis GTPase RsgA 1 (346 aa).

Residues 93–248 enclose the CP-type G domain; that stretch reads AEQLIAANFD…VIDTPGMREF (156 aa). Residues 138–141 and 190–198 each bind GTP; these read TKAD and GSSGVGKSS. Zn(2+) contacts are provided by Cys-271, Cys-276, His-278, and Cys-284.

Belongs to the TRAFAC class YlqF/YawG GTPase family. RsgA subfamily. As to quaternary structure, monomer. Associates with 30S ribosomal subunit, binds 16S rRNA. Requires Zn(2+) as cofactor.

It localises to the cytoplasm. One of several proteins that assist in the late maturation steps of the functional core of the 30S ribosomal subunit. Helps release RbfA from mature subunits. May play a role in the assembly of ribosomal proteins into the subunit. Circularly permuted GTPase that catalyzes slow GTP hydrolysis, GTPase activity is stimulated by the 30S ribosomal subunit. The sequence is that of Small ribosomal subunit biogenesis GTPase RsgA 1 from Listeria monocytogenes serovar 1/2a (strain ATCC BAA-679 / EGD-e).